The following is a 146-amino-acid chain: Single-stranded DNA-binding protein 1-A, mitochondrial (146 aa).

A mitochondrion-targeting transit peptide spans 1-17; it reads MFHRPALQVFRQFARCQ. The SSB domain maps to 28 to 140; the sequence is INKVQLLGRV…IIADNIIFLS (113 aa).

As to quaternary structure, homotetramer.

The protein localises to the mitochondrion. It is found in the mitochondrion matrix. It localises to the mitochondrion nucleoid. Functionally, binds preferentially and cooperatively to pyrimidine rich single-stranded DNA (ss-DNA). Required to maintain the copy number of mitochondrial DNA (mtDNA) and plays crucial roles during mtDNA replication that stimulate activity of the DNA polymerase at the replication fork. May also function in mtDNA repair. The polypeptide is Single-stranded DNA-binding protein 1-A, mitochondrial (ssbp1-a) (Xenopus laevis (African clawed frog)).